Consider the following 876-residue polypeptide: MSRFFATGTDSESESSSEDEPVVRAPAPVYTFSDDEEETKRVVRSMKEKRYEELEGIIHSIRNHRKIKDFSSALASFEELQKAYTRAAPVVQKEENGVAPRFFIRALVELDDWVVGAWNEREARKALSKGNSKALTSLRQKLRKYTKDFEAEISXFREDPDLPDDNERKDSSSSDESEDEEKPIKEKPKPEPLLRPPPEDDESSDSMDWASSSSDSSFSSDDEERGTSNIREQFIKKVTKKEDDEEKIKLKLKKREERRERSGKINKRDVADDGGEWETVRKGAATSDKPKMFAKDSDIDAALVVKKLGEISAARGRKRTDRRAQLELLHELRTVALQHNLGDALQLKLRSAIVAALFDYNPKVSDAMKPEYWSKLVENIDHMVTLLLAHEDMVLSETILEENEQLVTPPYQVRGCLLTYLERLDDEFTKLLKECDPHSNEYVERLKDEVRVSALIDRVCQVVERDGTPQEICRAYLRKIDHLYYKFDPRAVRKDLPPTEETTIKKMERYCKYIYAHDETDRLRTRAILSHIYHHALHDNWFQARDLLLMSHLQETVQHSDPSTQILYNRTMANLGLCAFRRGNVKEAHGCLAELMMTGKPKELLAQGLLPQRQHERSKEQEKIEKQRQMPFHMHINLELLECVYLVSAMLIEIPYMAAHEFDARRRMISKTFYQNLRASERQALVGPPESMREHAVAAARAMRRGDWRACLNYIVNEKMNAKVWDLMVGADNVRAMLGRLIREESLRTYLFTYAHVYASLSLRSLADMFELPRQRVHSLVSKMIINEELLASLDDPSECAILHRSEPTRMQALALQLADKVGNLVDSNERIFEKQGSFFQRGGAQRGEGRQRERPREGWNRRTRNRRRDDERADD.

2 disordered regions span residues 1–25 and 154–233; these read MSRF…VVRA and SXFR…IREQ. Positions 11 to 20 are enriched in acidic residues; sequence SESESSSEDE. 2 stretches are compositionally biased toward basic and acidic residues: residues 154–172 and 182–192; these read SXFR…KDSS and KPIKEKPKPEP. Over residues 206–219 the composition is skewed to low complexity; sequence SMDWASSSSDSSFS. The 177-residue stretch at 632-808 folds into the PCI domain; it reads FHMHINLELL…ECAILHRSEP (177 aa). Residues 839–876 are disordered; that stretch reads FFQRGGAQRGEGRQRERPREGWNRRTRNRRRDDERADD. Residues 848–861 are compositionally biased toward basic and acidic residues; sequence GEGRQRERPREGWN.

The protein belongs to the eIF-3 subunit C family. Component of the eukaryotic translation initiation factor 3 (eIF-3) complex.

Its subcellular location is the cytoplasm. Its function is as follows. Component of the eukaryotic translation initiation factor 3 (eIF-3) complex, which is involved in protein synthesis of a specialized repertoire of mRNAs and, together with other initiation factors, stimulates binding of mRNA and methionyl-tRNAi to the 40S ribosome. The eIF-3 complex specifically targets and initiates translation of a subset of mRNAs involved in cell proliferation. The chain is Eukaryotic translation initiation factor 3 subunit C from Bombyx mori (Silk moth).